We begin with the raw amino-acid sequence, 2879 residues long: Peramine synthetase ppzA (2879 aa).

Residues 1–12 (MTYDEGGHRNNE) are compositionally biased toward basic and acidic residues. The disordered stretch occupies residues 1 to 52 (MTYDEGGHRNNEETPQDVNMSSNNEGMSTSSPTGSYGEIIGQATVSVPQEDQ). Residues 16–34 (QDVNMSSNNEGMSTSSPTG) are compositionally biased toward polar residues. An adenylation 1 region spans residues 351–747 (QEQCRLQPNT…VGRKDTQVKI (397 aa)). Residues 882–958 (QPLSDMERLL…DLSRQSKYIE (77 aa)) form the Carrier 1 domain. Residue Ser-919 is modified to O-(pantetheine 4'-phosphoryl)serine. The interval 997 to 1410 (DAYPCTPLQE…ITILTTEDLE (414 aa)) is condensation. Residues 1433 to 1827 (DKVQHRPNAP…LSFVRRKDTT (395 aa)) are adenylation 2. Residues 1958 to 2050 (LEIGCGSGMM…KYLVKLIQDI (93 aa)) are methylation (Met) domain. A Carrier 2 domain is found at 2370 to 2448 (WPTTDTGKEL…RLLLDCCCDD (79 aa)). Ser-2407 is modified (O-(pantetheine 4'-phosphoryl)serine). The thiesterase (TE) domain stretch occupies residues 2500–2817 (TVLLTGANGF…LEDMLQDLDD (318 aa)).

The protein belongs to the NRP synthetase family. Pantetheine 4'-phosphate is required as a cofactor.

It carries out the reaction (S)-1-pyrroline-5-carboxylate + L-arginine + S-adenosyl-L-methionine + 2 ATP = peramine + 2 AMP + S-adenosyl-L-homocysteine + 2 diphosphate + H2O + 2 H(+). It functions in the pathway secondary metabolite biosynthesis. Nonribosomal peptide synthetase; part of the gene cluster that mediates the biosynthesis of pyrrolopyrazines, secondary metabolites showing insecticidal activity. The single multifunctional NRPS ppzA is responsible for the biosynthesis of peramine. The condensation domain of ppzA is proposed to catalyze formation of a peptide bond between 1-pyrroline-5-carboxylate and arginine. The methylation domain of ppzA would catalyze the N-methylation of the alpha-amino group of arginine. The reductase domain is proposed to be responsible for reduction of the thioester and the cyclization to form an iminium ion resulting in release from the peptide synthetase. Deprotonation of this intermediate and oxidation of the pyrroline ring would give rise to peramine. This final oxidation to give the pyrrole functionality may be spontaneous. In Epichloe species that produce only peramine, the peramine synthetase gene is not localized in a gene cluster, in contrast to Metarhizium species that contain additional pyrrolopyrazine biosynthesis genes. The 2-oxoglutarate-Fe(II) type oxidoreductase ppzC hydroxylates peramine to yield the newly identified compound 8-hydroxyperamine whereas ppzD converts L-proline into trans-4-hydroxy-L-proline, a precursor of peramine biosynthesis. In Metarhizium rileyi (strain RCEF 4871) (Nomuraea rileyi), this protein is Peramine synthetase ppzA.